A 321-amino-acid chain; its full sequence is tRNA-dihydrouridine synthase B (321 aa).

Residues 16–18 and Gln70 contribute to the FMN site; that span reads PMA. Cys100 acts as the Proton donor in catalysis. Residues Lys139, 200 to 202, and 224 to 225 each bind FMN; these read NGD and GR.

This sequence belongs to the Dus family. DusB subfamily. FMN serves as cofactor.

The catalysed reaction is a 5,6-dihydrouridine in tRNA + NAD(+) = a uridine in tRNA + NADH + H(+). It carries out the reaction a 5,6-dihydrouridine in tRNA + NADP(+) = a uridine in tRNA + NADPH + H(+). Catalyzes the synthesis of 5,6-dihydrouridine (D), a modified base found in the D-loop of most tRNAs, via the reduction of the C5-C6 double bond in target uridines. The polypeptide is tRNA-dihydrouridine synthase B (Klebsiella pneumoniae).